A 397-amino-acid polypeptide reads, in one-letter code: MEKTIAINAGSSSLKFQLYDMPSERVITAGIVERIGLKDSIFTITVDGEKIKEIIDIPDHEIAVQMLLEKLINHKVIGSYDEITGIGHRVVHGGERFPESVYIDDQVIKDIEALSELAPLHNPANVTGIKAFRKILPDVVSVAVFDTAFHQTMPPASYLYSLPYSYYEDYGIRKYGFHGTSHKYVSERAAELLGRPVEELRLLTCHLGNGASIAAIEGGKSMDTSMGFTPLAGVSMGTRSGNIDPALIPFIMEKTGKTAEQVLDVLNKESGMLGVSGISSDLRDLEDEAAKGNDRAELALQVFVDRIHKYIGSYAARMNGVDAIIFTAGIGENSSYIREKVLRGLEFMGVYWDPALNQVRGEERFLNYPHSPVKVIIIPTNEELMIARDVETIKQNH.

Position 8 (Asn-8) interacts with Mg(2+). An ATP-binding site is contributed by Lys-15. Arg-89 contributes to the substrate binding site. Asp-146 acts as the Proton donor/acceptor in catalysis. ATP is bound by residues 206-210 (HLGNG), 281-283 (DLR), and 329-333 (GIGEN). Glu-382 lines the Mg(2+) pocket.

It belongs to the acetokinase family. Homodimer. It depends on Mg(2+) as a cofactor. Mn(2+) serves as cofactor.

It localises to the cytoplasm. The catalysed reaction is acetate + ATP = acetyl phosphate + ADP. It participates in metabolic intermediate biosynthesis; acetyl-CoA biosynthesis; acetyl-CoA from acetate: step 1/2. Functionally, catalyzes the formation of acetyl phosphate from acetate and ATP. Can also catalyze the reverse reaction. This is Acetate kinase 1 from Listeria innocua serovar 6a (strain ATCC BAA-680 / CLIP 11262).